The following is a 206-amino-acid chain: Large ribosomal subunit protein mL62 (206 aa).

Residues 1 to 29 (MATAWGLRWGLSRTGTLLLAPPARCARRA) constitute a mitochondrion transit peptide. At Q90 the chain carries N5-methylglutamine.

This sequence belongs to the prokaryotic/mitochondrial release factor family. Mitochondrion-specific ribosomal protein mL62 subfamily. As to quaternary structure, component of the mitochondrial ribosome large subunit (39S) which comprises a 16S rRNA and about 50 distinct proteins. Methylation of glutamine in the GGQ triplet by HEMK1.

It is found in the mitochondrion. It catalyses the reaction an N-acyl-L-alpha-aminoacyl-tRNA + H2O = an N-acyl-L-amino acid + a tRNA + H(+). Its function is as follows. Essential peptidyl-tRNA hydrolase component of the mitochondrial large ribosomal subunit. Acts as a codon-independent translation release factor that has lost all stop codon specificity and directs the termination of translation in mitochondrion, possibly in case of abortive elongation. May be involved in the hydrolysis of peptidyl-tRNAs that have been prematurely terminated and thus in the recycling of stalled mitochondrial ribosomes. This is Large ribosomal subunit protein mL62 from Mus musculus (Mouse).